The following is a 362-amino-acid chain: Cobalt-precorrin-5B C(1)-methyltransferase (362 aa).

This sequence belongs to the CbiD family.

The enzyme catalyses Co-precorrin-5B + S-adenosyl-L-methionine = Co-precorrin-6A + S-adenosyl-L-homocysteine. Its pathway is cofactor biosynthesis; adenosylcobalamin biosynthesis; cob(II)yrinate a,c-diamide from sirohydrochlorin (anaerobic route): step 6/10. Catalyzes the methylation of C-1 in cobalt-precorrin-5B to form cobalt-precorrin-6A. The polypeptide is Cobalt-precorrin-5B C(1)-methyltransferase (Burkholderia cenocepacia (strain HI2424)).